Here is a 238-residue protein sequence, read N- to C-terminus: Orotidine 5'-phosphate decarboxylase (238 aa).

Residues Asp-10, Lys-32, 59–68 (DLKLHDIPNT), Thr-122, Arg-184, Gln-193, Gly-213, and Arg-214 contribute to the substrate site. Residue Lys-61 is the Proton donor of the active site.

It belongs to the OMP decarboxylase family. Type 1 subfamily. Homodimer.

The catalysed reaction is orotidine 5'-phosphate + H(+) = UMP + CO2. It functions in the pathway pyrimidine metabolism; UMP biosynthesis via de novo pathway; UMP from orotate: step 2/2. Its function is as follows. Catalyzes the decarboxylation of orotidine 5'-monophosphate (OMP) to uridine 5'-monophosphate (UMP). The polypeptide is Orotidine 5'-phosphate decarboxylase (Bacillus cereus (strain AH187)).